We begin with the raw amino-acid sequence, 260 residues long: MKILISNDDGYQAPGIVALHDALKTIADVEVVAPEHNNSAKSNALTLHSPLYVQTAHNGFRYVNGTPADCVHIALTGLLGYRPDLVVSGINNGANMGDDTIYSGTVGAAMEGYLFGIPSIAFSQVDKGWGEIESAARKAREIVQQMDRQNLVGEAPWLLNVNIPNMPYDALRPLRMCRLGRRHAAERVIEQQSPRGELMYWIGGAGAAKDAAEGTDFHATAHGHVSVTPLKVDLTDYDGLGYWAQTVARLVPAQASGEVA.

A divalent metal cation is bound by residues aspartate 8, aspartate 9, serine 39, and asparagine 91.

This sequence belongs to the SurE nucleotidase family. A divalent metal cation serves as cofactor.

It is found in the cytoplasm. The enzyme catalyses a ribonucleoside 5'-phosphate + H2O = a ribonucleoside + phosphate. In terms of biological role, nucleotidase that shows phosphatase activity on nucleoside 5'-monophosphates. The chain is 5'-nucleotidase SurE from Acidovorax ebreus (strain TPSY) (Diaphorobacter sp. (strain TPSY)).